A 96-amino-acid polypeptide reads, in one-letter code: uncharacterized protein (96 aa).

Residues methionine 1–alanine 19 form the signal peptide.

This is an uncharacterized protein from Synechocystis sp. (strain ATCC 27184 / PCC 6803 / Kazusa).